A 95-amino-acid polypeptide reads, in one-letter code: Co-chaperonin GroES (95 aa).

Belongs to the GroES chaperonin family. In terms of assembly, heptamer of 7 subunits arranged in a ring. Interacts with the chaperonin GroEL.

The protein resides in the cytoplasm. Together with the chaperonin GroEL, plays an essential role in assisting protein folding. The GroEL-GroES system forms a nano-cage that allows encapsulation of the non-native substrate proteins and provides a physical environment optimized to promote and accelerate protein folding. GroES binds to the apical surface of the GroEL ring, thereby capping the opening of the GroEL channel. This Marinobacter nauticus (strain ATCC 700491 / DSM 11845 / VT8) (Marinobacter aquaeolei) protein is Co-chaperonin GroES.